Here is a 390-residue protein sequence, read N- to C-terminus: Lipoyl synthase, mitochondrial (390 aa).

The transit peptide at 1-19 directs the protein to the mitochondrion; that stretch reads MPTLLRILRPPRSPFTRCL. The disordered stretch occupies residues 23–48; sequence ATPSSSGSSSRSKFTESLETGPGLDD. [4Fe-4S] cluster-binding residues include cysteine 98, cysteine 103, cysteine 109, cysteine 136, cysteine 140, cysteine 143, and serine 350. A Radical SAM core domain is found at 119-339; sequence AEGRSAATAT…KEVAENLGFL (221 aa).

This sequence belongs to the radical SAM superfamily. Lipoyl synthase family. It depends on [4Fe-4S] cluster as a cofactor.

Its subcellular location is the mitochondrion. It carries out the reaction [[Fe-S] cluster scaffold protein carrying a second [4Fe-4S](2+) cluster] + N(6)-octanoyl-L-lysyl-[protein] + 2 oxidized [2Fe-2S]-[ferredoxin] + 2 S-adenosyl-L-methionine + 4 H(+) = [[Fe-S] cluster scaffold protein] + N(6)-[(R)-dihydrolipoyl]-L-lysyl-[protein] + 4 Fe(3+) + 2 hydrogen sulfide + 2 5'-deoxyadenosine + 2 L-methionine + 2 reduced [2Fe-2S]-[ferredoxin]. The protein operates within protein modification; protein lipoylation via endogenous pathway; protein N(6)-(lipoyl)lysine from octanoyl-[acyl-carrier-protein]: step 2/2. Catalyzes the radical-mediated insertion of two sulfur atoms into the C-6 and C-8 positions of the octanoyl moiety bound to the lipoyl domains of lipoate-dependent enzymes, thereby converting the octanoylated domains into lipoylated derivatives. This chain is Lipoyl synthase, mitochondrial, found in Laccaria bicolor (strain S238N-H82 / ATCC MYA-4686) (Bicoloured deceiver).